A 519-amino-acid chain; its full sequence is Tetratricopeptide repeat protein 31 (519 aa).

A coiled-coil region spans residues 147–197 (QKLLVTEEEANRLAEELVAEEERMKQKAEKKRLKKKRQKERKRQERLEQYC). Over residues 175-187 (EKKRLKKKRQKER) the composition is skewed to basic residues. Disordered regions lie at residues 175–230 (EKKR…EEDS) and 253–294 (RREK…VQAS). At S278 the chain carries Phosphoserine. 3 TPR repeats span residues 305–338 (SQEL…NPQD), 339–372 (HRLF…RPGW), and 373–406 (PRGL…GSQP). The segment at 474–506 (PSCHRSHPNQPLSQTQSRRPHPLKPQDPSKGWD) is disordered. Positions 481–490 (PNQPLSQTQS) are enriched in polar residues.

The sequence is that of Tetratricopeptide repeat protein 31 (TTC31) from Homo sapiens (Human).